The chain runs to 1427 residues: DNA-directed RNA polymerase subunit beta' (1427 aa).

4 residues coordinate Zn(2+): C70, C72, C85, and C88. Residues D461, D463, and D465 each contribute to the Mg(2+) site. Residues C838, C912, C919, and C922 each contribute to the Zn(2+) site.

This sequence belongs to the RNA polymerase beta' chain family. The RNAP catalytic core consists of 2 alpha, 1 beta, 1 beta' and 1 omega subunit. When a sigma factor is associated with the core the holoenzyme is formed, which can initiate transcription. Mg(2+) serves as cofactor. It depends on Zn(2+) as a cofactor.

The catalysed reaction is RNA(n) + a ribonucleoside 5'-triphosphate = RNA(n+1) + diphosphate. Its function is as follows. DNA-dependent RNA polymerase catalyzes the transcription of DNA into RNA using the four ribonucleoside triphosphates as substrates. This is DNA-directed RNA polymerase subunit beta' from Sorangium cellulosum (strain So ce56) (Polyangium cellulosum (strain So ce56)).